A 192-amino-acid chain; its full sequence is Cytidylate kinase (192 aa).

12–20 (GLAGSGTTT) contributes to the ATP binding site.

It belongs to the cytidylate kinase family. Type 2 subfamily.

The protein localises to the cytoplasm. The enzyme catalyses CMP + ATP = CDP + ADP. It catalyses the reaction dCMP + ATP = dCDP + ADP. The protein is Cytidylate kinase (cmk) of Pyrococcus horikoshii (strain ATCC 700860 / DSM 12428 / JCM 9974 / NBRC 100139 / OT-3).